A 493-amino-acid chain; its full sequence is Rho guanine nucleotide exchange factor 9 (493 aa).

Residues 15-74 form the SH3 domain; it reads DSIVSAEAVWDHVTMANRGVAFKAGDVIKVLDASNKDWWWGQIDDEEGWFPASFVRLWVN. The tract at residues 107–117 is interaction with GPHN; that stretch reads RDQMRANVINE. In terms of domain architecture, DH spans 110–294; it reads MRANVINEIM…RNVTQQINER (185 aa). In terms of domain architecture, PH spans 325–432; that stretch reads ELIYTGEMAW…WLRAFREERK (108 aa). Residues 453–473 form a disordered region; it reads AMTVRKASKQKGRVGEEENQS.

As to quaternary structure, interacts with GPHN. As to expression, detected in brain, throughout the gray matter. Detected at low levels in heart and skeletal muscle.

Its subcellular location is the cytoplasm. It localises to the postsynaptic density. In terms of biological role, acts as a guanine nucleotide exchange factor (GEF) for CDC42. Promotes formation of GPHN clusters. The sequence is that of Rho guanine nucleotide exchange factor 9 (Arhgef9) from Rattus norvegicus (Rat).